The chain runs to 697 residues: Ribosomal RNA large subunit methyltransferase K/L (697 aa).

The THUMP domain occupies 43–154; it reads ILYNSLMWSR…QNLVHIMLDL (112 aa).

The protein belongs to the methyltransferase superfamily. RlmKL family.

The protein resides in the cytoplasm. It catalyses the reaction guanosine(2445) in 23S rRNA + S-adenosyl-L-methionine = N(2)-methylguanosine(2445) in 23S rRNA + S-adenosyl-L-homocysteine + H(+). The catalysed reaction is guanosine(2069) in 23S rRNA + S-adenosyl-L-methionine = N(2)-methylguanosine(2069) in 23S rRNA + S-adenosyl-L-homocysteine + H(+). Functionally, specifically methylates the guanine in position 2445 (m2G2445) and the guanine in position 2069 (m7G2069) of 23S rRNA. The chain is Ribosomal RNA large subunit methyltransferase K/L from Buchnera aphidicola subsp. Schizaphis graminum (strain Sg).